We begin with the raw amino-acid sequence, 339 residues long: Alcohol dehydrogenase (339 aa).

Cys38, His61, Cys92, Cys95, Cys98, Cys106, and Cys148 together coordinate Zn(2+). NAD(+) is bound by residues 172–177, Asp195, Lys200, 260–262, and Arg331; these read GIGGLG and VGL.

This sequence belongs to the zinc-containing alcohol dehydrogenase family. Zn(2+) is required as a cofactor.

It catalyses the reaction a primary alcohol + NAD(+) = an aldehyde + NADH + H(+). The catalysed reaction is a secondary alcohol + NAD(+) = a ketone + NADH + H(+). Its activity is regulated as follows. The rate-limiting step is NADH release. Catabolite repression. Functionally, active with primary alcohols, including methanol. The polypeptide is Alcohol dehydrogenase (adh) (Geobacillus stearothermophilus (Bacillus stearothermophilus)).